We begin with the raw amino-acid sequence, 340 residues long: Deubiquitinase SseL (340 aa).

Histidine 223 is an active-site residue. Cysteine 285 serves as the catalytic Nucleophile.

Belongs to the peptidase C79 family.

Its subcellular location is the secreted. It localises to the host cytoplasm. Effector proteins function to alter host cell physiology and promote bacterial survival in host tissues. This protease targets the host cell ubiquitin pathway by acting as a deubiquitinase in infected host cells. The polypeptide is Deubiquitinase SseL (sseL) (Salmonella choleraesuis (strain SC-B67)).